The primary structure comprises 59 residues: Probable stress-associated endoplasmic reticulum protein (59 aa).

The disordered stretch occupies residues 1 to 30 (MSQSRTLRQKSQKYQENIEKRGVASPKKKE). Residues 1-34 (MSQSRTLRQKSQKYQENIEKRGVASPKKKEDGLN) lie on the Cytoplasmic side of the membrane. Over residues 16 to 30 (ENIEKRGVASPKKKE) the composition is skewed to basic and acidic residues. A helical; Anchor for type IV membrane protein transmembrane segment spans residues 35 to 55 (INPYVLGFIIFVVVGSTLLQI). The Extracellular segment spans residues 56-59 (LKGQ).

It belongs to the RAMP4 family.

It localises to the membrane. The protein resides in the endoplasmic reticulum membrane. Its function is as follows. May interact with target proteins during translocation into the lumen of the endoplasmic reticulum. May protect unfolded target proteins against degradation and facilitate correct glycosylation. This is Probable stress-associated endoplasmic reticulum protein (serp) from Dictyostelium discoideum (Social amoeba).